The following is a 101-amino-acid chain: Non-structural protein NS-S (101 aa).

Belongs to the orthobunyavirus NS-S protein family.

Functionally, inhibits host transcriptional machinery, by producing modifications to the phosphorylation state of the C-terminal domain (CTD) of RNA polymerase II. Inhibits phosphorylation at serine 2 in the heptapeptide repeat (YSPTSPS) of the CTD of RNA polymerase II, suggesting that the elongation step of transcription and/or 3'-end processing is prevented. Inhibition of host transcription machinery leads to shut off of host cell protein synthesis and inhibition of the host innate immune response. NSs also seems to be involved in the nuclear relocalization of host PABP1. This chain is Non-structural protein NS-S (N), found in Bunyamwera virus (BUNV).